Consider the following 168-residue polypeptide: Sec-independent protein translocase protein TatB (168 aa).

The helical transmembrane segment at 1–21 (MIDLGISKLALIGAVALIVIG) threads the bilayer. Disordered stretches follow at residues 92–132 (FDGS…QGAR) and 146–168 (VQSG…SFFE). The segment covering 94-107 (GSASSSSSSDTGSG) has biased composition (low complexity). Over residues 117–126 (KSHNGRKSWR) the composition is skewed to basic residues.

This sequence belongs to the TatB family. In terms of assembly, the Tat system comprises two distinct complexes: a TatABC complex, containing multiple copies of TatA, TatB and TatC subunits, and a separate TatA complex, containing only TatA subunits. Substrates initially bind to the TatABC complex, which probably triggers association of the separate TatA complex to form the active translocon.

It is found in the cell inner membrane. Its function is as follows. Part of the twin-arginine translocation (Tat) system that transports large folded proteins containing a characteristic twin-arginine motif in their signal peptide across membranes. Together with TatC, TatB is part of a receptor directly interacting with Tat signal peptides. TatB may form an oligomeric binding site that transiently accommodates folded Tat precursor proteins before their translocation. The protein is Sec-independent protein translocase protein TatB of Cupriavidus metallidurans (strain ATCC 43123 / DSM 2839 / NBRC 102507 / CH34) (Ralstonia metallidurans).